We begin with the raw amino-acid sequence, 284 residues long: Ribosomal RNA small subunit methyltransferase A (284 aa).

6 residues coordinate S-adenosyl-L-methionine: Asn33, Leu35, Gly60, Glu81, Asp101, and Asn124.

The protein belongs to the class I-like SAM-binding methyltransferase superfamily. rRNA adenine N(6)-methyltransferase family. RsmA subfamily.

It localises to the cytoplasm. It catalyses the reaction adenosine(1518)/adenosine(1519) in 16S rRNA + 4 S-adenosyl-L-methionine = N(6)-dimethyladenosine(1518)/N(6)-dimethyladenosine(1519) in 16S rRNA + 4 S-adenosyl-L-homocysteine + 4 H(+). Functionally, specifically dimethylates two adjacent adenosines (A1518 and A1519) in the loop of a conserved hairpin near the 3'-end of 16S rRNA in the 30S particle. May play a critical role in biogenesis of 30S subunits. In Chlamydia felis (strain Fe/C-56) (Chlamydophila felis), this protein is Ribosomal RNA small subunit methyltransferase A.